Reading from the N-terminus, the 361-residue chain is Protein RecA (361 aa).

Residue 77-84 coordinates ATP; sequence GPESSGKT.

The protein belongs to the RecA family.

The protein localises to the cytoplasm. Can catalyze the hydrolysis of ATP in the presence of single-stranded DNA, the ATP-dependent uptake of single-stranded DNA by duplex DNA, and the ATP-dependent hybridization of homologous single-stranded DNAs. It interacts with LexA causing its activation and leading to its autocatalytic cleavage. This chain is Protein RecA, found in Sinorhizobium fredii (strain NBRC 101917 / NGR234).